The primary structure comprises 692 residues: Transforming growth factor beta activator LRRC33 (692 aa).

The N-terminal stretch at 1–24 (MEFLPLWLCLGFHFLIVEWRSGRG) is a signal peptide. Residues 25–650 (TATAASQGGC…CKWGQVDTGL (626 aa)) lie on the Extracellular side of the membrane. The 28-residue stretch at 29–56 (ASQGGCKVVDRVADCRSLNLASVPSGLP) folds into the LRRNT domain. 10 LRR repeats span residues 58-79 (HSRM…SLQA), 82-103 (RLED…AFHE), 106-127 (HLQN…SATA), 133-155 (RLRR…MLQN), 158-179 (SLEV…VFEG), 182-203 (RLVE…AFDG), 206-227 (ELRR…SLTQ), 228-239 (LRFLNVSYNILE), 251-272 (ELEI…PQCG), and 273-294 (KLHT…YNTS). The N-linked (GlcNAc...) asparagine glycan is linked to asparagine 74. N-linked (GlcNAc...) asparagine glycosylation occurs at asparagine 155. Asparagine 232 is a glycosylation site (N-linked (GlcNAc...) asparagine). N-linked (GlcNAc...) asparagine glycosylation is found at asparagine 292, asparagine 309, and asparagine 312. LRR repeat units follow at residues 329–350 (ALRF…FLKK), 353–374 (SLSH…EHEP), 377–398 (ALTE…PGLT), 403–424 (NLRV…LFHS), 427–448 (SITT…VPLD), 463–484 (SLRS…PFQG), 486–507 (SLTH…SPLS), 512–533 (TLQV…MDFS), 537–558 (NLRE…KGSS), 559–580 (ALQT…VVSE), and 585–605 (GLQT…EGWG). An N-linked (GlcNAc...) asparagine glycan is attached at asparagine 408. N-linked (GlcNAc...) asparagine glycosylation is present at asparagine 500. The LRRCT domain maps to 606 to 643 (ALQHFKTIADLSMVTCNLSSKIIRVVELPEGIPQDCKW). Asparagine 622 is a glycosylation site (N-linked (GlcNAc...) asparagine). A helical transmembrane segment spans residues 651-671 (FYLVLILPSCLTLLVASTVIF). Over 672–692 (LTFKKPLLQVIKSRCHWSSIY) the chain is Cytoplasmic.

This sequence belongs to the LRRC32/LRRC33 family. In terms of assembly, interacts (via LRR repeats) with TLR2, TLR3, TLR4, TLR9 and probably other Toll-like receptors. Interacts with CYBB/NOX2; the interaction is direct. Interacts with TGFB1; associates via disulfide bonds with the Latency-associated peptide chain (LAP) regulatory chain of TGFB1, leading to regulate activation of TGF-beta-1.

Its subcellular location is the cell membrane. It localises to the endoplasmic reticulum membrane. Its function is as follows. Key regulator of transforming growth factor beta-1 (TGFB1) specifically required for microglia function in the nervous system. Required for activation of latent TGF-beta-1 in macrophages and microglia: associates specifically via disulfide bonds with the Latency-associated peptide (LAP), which is the regulatory chain of TGFB1, and regulates integrin-dependent activation of TGF-beta-1. TGF-beta-1 activation mediated by LRRC33/NRROS is highly localized: there is little spreading of TGF-beta-1 activated from one microglial cell to neighboring microglia, suggesting the existence of localized and selective activation of TGF-beta-1 by LRRC33/NRROS. Indirectly plays a role in Toll-like receptor (TLR) signaling: ability to inhibit TLR-mediated NF-kappa-B activation and cytokine production is probably a consequence of its role in TGF-beta-1 signaling. The polypeptide is Transforming growth factor beta activator LRRC33 (Rattus norvegicus (Rat)).